Reading from the N-terminus, the 197-residue chain is Recombination protein RecR (197 aa).

Residues 55-70 (CVQCRDFTESEICTIC) form a C4-type zinc finger. Positions 78–173 (QQLCVVESPA…RPSRLAQGMP (96 aa)) constitute a Toprim domain.

It belongs to the RecR family.

In terms of biological role, may play a role in DNA repair. It seems to be involved in an RecBC-independent recombinational process of DNA repair. It may act with RecF and RecO. The protein is Recombination protein RecR of Xanthomonas oryzae pv. oryzae (strain MAFF 311018).